A 117-amino-acid chain; its full sequence is NADH-ubiquinone oxidoreductase chain 3 (117 aa).

Transmembrane regions (helical) follow at residues 4 to 24 (IIII…LASI), 60 to 80 (ITII…MIII), and 86 to 106 (IMIW…GLYH).

Belongs to the complex I subunit 3 family.

The protein localises to the mitochondrion membrane. The enzyme catalyses a ubiquinone + NADH + 5 H(+)(in) = a ubiquinol + NAD(+) + 4 H(+)(out). In terms of biological role, core subunit of the mitochondrial membrane respiratory chain NADH dehydrogenase (Complex I) that is believed to belong to the minimal assembly required for catalysis. Complex I functions in the transfer of electrons from NADH to the respiratory chain. The immediate electron acceptor for the enzyme is believed to be ubiquinone. The polypeptide is NADH-ubiquinone oxidoreductase chain 3 (mt:ND3) (Drosophila yakuba (Fruit fly)).